The following is a 449-amino-acid chain: N-succinylarginine dihydrolase (449 aa).

Residues 19–28 (GGLSYGNVAS), Asn110, and 137–138 (HR) contribute to the substrate site. A disordered region spans residues 23 to 43 (YGNVASQSNSQQASNPREAAR). The segment covering 27 to 37 (ASQSNSQQASN) has biased composition (low complexity). Glu174 is an active-site residue. Arg214 contacts substrate. The active site involves His250. The substrate site is built by Asp252 and Asn365. Residue Cys371 is the Nucleophile of the active site.

The protein belongs to the succinylarginine dihydrolase family. Homodimer.

It catalyses the reaction N(2)-succinyl-L-arginine + 2 H2O + 2 H(+) = N(2)-succinyl-L-ornithine + 2 NH4(+) + CO2. It participates in amino-acid degradation; L-arginine degradation via AST pathway; L-glutamate and succinate from L-arginine: step 2/5. In terms of biological role, catalyzes the hydrolysis of N(2)-succinylarginine into N(2)-succinylornithine, ammonia and CO(2). The polypeptide is N-succinylarginine dihydrolase (Pseudomonas putida (strain ATCC 700007 / DSM 6899 / JCM 31910 / BCRC 17059 / LMG 24140 / F1)).